Reading from the N-terminus, the 467-residue chain is Stromal membrane-associated protein 1 (467 aa).

Positions 18–136 (QLILSKLLRE…KYYDKNAIAI (119 aa)) constitute an Arf-GAP domain. Residues 33–56 (CADCEAKGPRWASWNIGVFICIRC) form a C4-type zinc finger. Residues 145 to 155 (PLQPLVSSPSL) show a composition bias toward polar residues. Disordered regions lie at residues 145 to 224 (PLQP…LDGP) and 408 to 467 (KFGL…QLWK). 2 stretches are compositionally biased toward basic and acidic residues: residues 160–185 (DKNK…EKPA) and 192–204 (KLQK…EPKK). Residues 218–222 (LLGLD) carry the Interaction with clathrin heavy chains motif. Residues 413–438 (QAQQPQWSLSQMNQQMAGMSISSATP) are compositionally biased toward polar residues. Residues 446 to 467 (SSTTAGWSGSSSGQTLSTQLWK) show a composition bias toward low complexity.

In terms of assembly, interacts with ARF6. Interacts with clathrin heavy chains via the clathrin box-like motif. Detected in bone marrow, adrenal gland, trachea, lymph node, spinal cord, peripheral blood leukocytes, thyroid and stomach.

Its subcellular location is the cell membrane. Functionally, GTPase activating protein that acts on ARF6. Plays a role in clathrin-dependent endocytosis. May play a role in erythropoiesis. This Homo sapiens (Human) protein is Stromal membrane-associated protein 1 (SMAP1).